The primary structure comprises 182 residues: Ferritin heavy chain (182 aa).

An N-acetylmethionine modification is found at M1. N-acetylthreonine; in Ferritin heavy chain, N-terminally processed is present on T2. Residues 11 to 160 (QNYHQDSEAA…DHVTNLRRMG (150 aa)) form the Ferritin-like diiron domain. Residues E28, E63, H66, E108, and Q142 each contribute to the Fe cation site.

It belongs to the ferritin family. In terms of assembly, oligomer of 24 subunits. There are two types of subunits: L (light) chain and H (heavy) chain. The major chain can be light or heavy, depending on the species and tissue type. The functional molecule forms a roughly spherical shell with a diameter of 12 nm and contains a central cavity into which the insoluble mineral iron core is deposited. Interacts with NCOA4; NCOA4 promotes targeting of the iron-binding ferritin complex to autolysosomes following starvation or iron depletion.

Its subcellular location is the cytoplasm. The protein resides in the lysosome. It is found in the cytoplasmic vesicle. The protein localises to the autophagosome. It carries out the reaction 4 Fe(2+) + O2 + 4 H(+) = 4 Fe(3+) + 2 H2O. Its function is as follows. Stores iron in a soluble, non-toxic, readily available form. Important for iron homeostasis. Has ferroxidase activity. Iron is taken up in the ferrous form and deposited as ferric hydroxides after oxidation. Also plays a role in delivery of iron to cells. Mediates iron uptake in capsule cells of the developing kidney. Delivery to lysosomes is mediated by the cargo receptor NCOA4 for autophagic degradation and release of iron. The polypeptide is Ferritin heavy chain (FTH1) (Equus caballus (Horse)).